A 291-amino-acid polypeptide reads, in one-letter code: Elongation factor Ts (291 aa).

An involved in Mg(2+) ion dislocation from EF-Tu region spans residues 80–83 (TDFV).

Belongs to the EF-Ts family.

Its subcellular location is the cytoplasm. In terms of biological role, associates with the EF-Tu.GDP complex and induces the exchange of GDP to GTP. It remains bound to the aminoacyl-tRNA.EF-Tu.GTP complex up to the GTP hydrolysis stage on the ribosome. This Ligilactobacillus salivarius (strain UCC118) (Lactobacillus salivarius) protein is Elongation factor Ts.